Here is a 310-residue protein sequence, read N- to C-terminus: Protoheme IX farnesyltransferase (310 aa).

9 consecutive transmembrane segments (helical) span residues V30–A47, G50–G70, L102–L122, W126–L146, I152–I172, V181–L201, I228–A248, I251–F271, and A286–L306.

The protein belongs to the UbiA prenyltransferase family. Protoheme IX farnesyltransferase subfamily.

It is found in the cell inner membrane. It carries out the reaction heme b + (2E,6E)-farnesyl diphosphate + H2O = Fe(II)-heme o + diphosphate. The protein operates within porphyrin-containing compound metabolism; heme O biosynthesis; heme O from protoheme: step 1/1. Converts heme B (protoheme IX) to heme O by substitution of the vinyl group on carbon 2 of heme B porphyrin ring with a hydroxyethyl farnesyl side group. This is Protoheme IX farnesyltransferase from Koribacter versatilis (strain Ellin345).